We begin with the raw amino-acid sequence, 85 residues long: Antitoxin VapB4 (85 aa).

It belongs to the phD/YefM antitoxin family. As to quaternary structure, interacts with cognate toxin VapC4.

Functionally, antitoxin component of a type II toxin-antitoxin (TA) system. Antitoxin that counteracts the effect of the VapC4 toxin. This chain is Antitoxin VapB4 (vapB4), found in Mycobacterium tuberculosis (strain CDC 1551 / Oshkosh).